The chain runs to 128 residues: Sulfurtransferase TusD (128 aa).

Catalysis depends on Cys-78, which acts as the Cysteine persulfide intermediate.

It belongs to the DsrE/TusD family. Heterohexamer, formed by a dimer of trimers. The hexameric TusBCD complex contains 2 copies each of TusB, TusC and TusD. The TusBCD complex interacts with TusE.

The protein localises to the cytoplasm. Functionally, part of a sulfur-relay system required for 2-thiolation of 5-methylaminomethyl-2-thiouridine (mnm(5)s(2)U) at tRNA wobble positions. Accepts sulfur from TusA and transfers it in turn to TusE. In Enterobacter sp. (strain 638), this protein is Sulfurtransferase TusD.